We begin with the raw amino-acid sequence, 520 residues long: Maturase K (520 aa).

The protein belongs to the intron maturase 2 family. MatK subfamily.

The protein resides in the plastid. It localises to the chloroplast. Functionally, usually encoded in the trnK tRNA gene intron. Probably assists in splicing its own and other chloroplast group II introns. This chain is Maturase K, found in Linum perenne (Perennial flax).